Consider the following 309-residue polypeptide: 5-formyl-3-hydroxy-2-methylpyridine 4-carboxylate 5-dehydrogenase (309 aa).

NAD(+) is bound by residues 12 to 13 (TM), D32, 87 to 89 (VPE), and K94.

Belongs to the 3-hydroxyacyl-CoA dehydrogenase family. Homodimer.

The catalysed reaction is 5-formyl-3-hydroxy-2-methylpyridine-4-carboxylate + NAD(+) + H2O = 5-hydroxy-6-methylpyridine-3,4-dicarboxylate + NADH + 2 H(+). It carries out the reaction 5-formyl-3-hydroxy-2-methylpyridine-4-carboxylate + NADH + H(+) = 4-pyridoxate + NAD(+). It participates in cofactor degradation; B6 vitamer degradation. Involved in the degradation of pyridoxine (vitamin B(6)). Catalyzes the oxidation of 5-formyl-3-hydroxy-2-methylpyridine-4-carboxylate (FHMPC) by NAD(+) to 5-hydroxy-6-methylpyridine-3,4-dicarboxylate (HMPDC). Can also catalyze the reduction of FHMPC by NADH to 4-pyridoxic acid. The chain is 5-formyl-3-hydroxy-2-methylpyridine 4-carboxylate 5-dehydrogenase from Mesorhizobium japonicum (strain LMG 29417 / CECT 9101 / MAFF 303099) (Mesorhizobium loti (strain MAFF 303099)).